The following is a 271-amino-acid chain: Phosphate import ATP-binding protein PstB 2 (271 aa).

One can recognise an ABC transporter domain in the interval 25–266 (MATEDLHVYY…PQEKQTEDYI (242 aa)). 57-64 (GPSGCGKS) lines the ATP pocket.

It belongs to the ABC transporter superfamily. Phosphate importer (TC 3.A.1.7) family. In terms of assembly, the complex is composed of two ATP-binding proteins (PstB), two transmembrane proteins (PstC and PstA) and a solute-binding protein (PstS).

The protein localises to the cell membrane. It carries out the reaction phosphate(out) + ATP + H2O = ADP + 2 phosphate(in) + H(+). Its function is as follows. Part of the ABC transporter complex PstSACB involved in phosphate import. Responsible for energy coupling to the transport system. The polypeptide is Phosphate import ATP-binding protein PstB 2 (Listeria monocytogenes serovar 1/2a (strain ATCC BAA-679 / EGD-e)).